A 354-amino-acid chain; its full sequence is Protein RecA (354 aa).

65 to 72 (GPESSGKT) is an ATP binding site.

It belongs to the RecA family.

It localises to the cytoplasm. In terms of biological role, can catalyze the hydrolysis of ATP in the presence of single-stranded DNA, the ATP-dependent uptake of single-stranded DNA by duplex DNA, and the ATP-dependent hybridization of homologous single-stranded DNAs. It interacts with LexA causing its activation and leading to its autocatalytic cleavage. The protein is Protein RecA of Vibrio cholerae serotype O1 (strain ATCC 39315 / El Tor Inaba N16961).